We begin with the raw amino-acid sequence, 857 residues long: Protein sip-5 (857 aa).

Disordered regions lie at residues 1 to 81 (MGNA…ARRL), 157 to 231 (GLPI…FKPT), 384 to 416 (SESSVNSGSLSPGVASPGGRRRNQSLSANAPNV), 466 to 517 (FGRR…GNRR), 545 to 747 (KAEK…PMFN), and 763 to 857 (HAGK…QVTL). 2 stretches are compositionally biased toward basic and acidic residues: residues 7-16 (KESRGDDSGR) and 36-48 (ESSRRNRNTRHDL). Over residues 49–61 (TGLLGRAAGGSSS) the composition is skewed to low complexity. The span at 62–81 (HADERHERKETKQEREARRL) shows a compositional bias: basic and acidic residues. Composition is skewed to polar residues over residues 179–191 (ASPTDASSNTNHL) and 199–208 (SLSTASEHST). Composition is skewed to low complexity over residues 209–230 (SNAGSALPSPGSGKGSSSPFKP), 384–394 (SESSVNSGSLS), and 476–504 (SASATPGNGDENRGTGPATPANAGATANT). Over residues 545–572 (KAEKEEQKEAKKREKEREKAEKKAEKAA) the composition is skewed to basic and acidic residues. Low complexity-rich tracts occupy residues 586–604 (SRSGHSSASGSSLSLPGLS) and 621–645 (ASVASAMASTGAAMTTPAAPGALAP). Residues 648 to 657 (STKDKGKAVD) show a composition bias toward basic and acidic residues. The span at 688-697 (SSASSASSSA) shows a compositional bias: low complexity. Polar residues predominate over residues 698–712 (VESNQGSYVPPSNLQ). Over residues 783-799 (ETAKSGEGAGEHVEHVL) the composition is skewed to basic and acidic residues. 2 stretches are compositionally biased toward polar residues: residues 800 to 838 (DSQTTGISEQDSEINSQPPRLTVTLDSPATSVGDVSTAS) and 845 to 857 (NETTVEHATQVTL).

This sequence belongs to the SIP5 family.

It is found in the cytoplasm. Functionally, may negatively regulate the snf-1 kinase. This Neurospora crassa (strain ATCC 24698 / 74-OR23-1A / CBS 708.71 / DSM 1257 / FGSC 987) protein is Protein sip-5 (sip-5).